The following is a 635-amino-acid chain: MGNGNSREAKESRRSRLRHKLQKFRIHRRHLRSSRNSAGMVIQRTVSAEDFSGIALLTLIGAEMKFKDKWLACVSFGEQTFRTEISDTTQKPIWNSEKKLLLEKNGPSLARVSVFETNRVARNKIIGYCELDIFDFVVQEPESTCKSFNLLDPTSSNVVGSIFLSCAIEDPVETERRFAKRILSIVDYNEDGQLSFSEFSDLIKAFGNLVAANKKEELFKAADLNGDGVVTIDELAALLALQQEQEPIINNCPVCGEALQVSDKLNAMIHMTLCFDEGTGNQVMTGGFLTDRQASYGWMFKLSEWTHLSTYDVGLNTGSSASYIVVIDRKSKRLVEELIDSKIVLSMRAIYQSKIGLRLMDQGAKEILQRLSEKQGKKMSSVESAQKIPRFLEFFKDQINMAEVKYPLQHFKTFNEFFIRELKPGARPIACMNRNDVAVCAADCRLMAFQSVEDSTRFWIKGKKFSIRGLLGKNVNPNAFLDGSLVIFRLAPQDYHRFHVPVSGVIEQFVDVSGSLYTVNPIAVNSKYCNVFTENKRTVAIISTAEFGKVAFVAIGATMVGSINFVRKEGEHVKKGDELGYFSFGGSTVICVFEKDAIGIDNDLLVNSGRSLETLVSVGMQLGVSTRTFARSTLI.

One can recognise a C2 domain in the interval 20–146 (KLQKFRIHRR…VVQEPESTCK (127 aa)). EF-hand domains lie at 174-209 (TERRFAKRILSIVDYNEDGQLSFSEFSDLIKAFGNL) and 210-245 (VAANKKEELFKAADLNGDGVVTIDELAALLALQQEQ). Ca(2+) is bound by residues aspartate 187, asparagine 189, aspartate 191, glutamine 193, glutamate 198, aspartate 223, asparagine 225, aspartate 227, and glutamate 234. Residues aspartate 443, histidine 499, and serine 587 each act as charge relay system; for autoendoproteolytic cleavage activity in the active site. Serine 587 acts as the Schiff-base intermediate with substrate; via pyruvic acid; for decarboxylase activity in catalysis. Pyruvic acid (Ser); by autocatalysis is present on serine 587.

Belongs to the phosphatidylserine decarboxylase family. PSD-B subfamily. Eukaryotic type II sub-subfamily. In terms of assembly, heterodimer of a large membrane-associated beta subunit and a small pyruvoyl-containing alpha subunit. The cofactor is pyruvate. Post-translationally, is synthesized initially as an inactive proenzyme. Formation of the active enzyme involves a self-maturation process in which the active site pyruvoyl group is generated from an internal serine residue via an autocatalytic post-translational modification. Two non-identical subunits are generated from the proenzyme in this reaction, and the pyruvate is formed at the N-terminus of the alpha chain, which is derived from the carboxyl end of the proenzyme. The autoendoproteolytic cleavage occurs by a canonical serine protease mechanism, in which the side chain hydroxyl group of the serine supplies its oxygen atom to form the C-terminus of the beta chain, while the remainder of the serine residue undergoes an oxidative deamination to produce ammonia and the pyruvoyl prosthetic group on the alpha chain. During this reaction, the Ser that is part of the protease active site of the proenzyme becomes the pyruvoyl prosthetic group, which constitutes an essential element of the active site of the mature decarboxylase. In terms of tissue distribution, highly expressed in flowers and at lower levels in leaves.

It is found in the vacuole membrane. The enzyme catalyses a 1,2-diacyl-sn-glycero-3-phospho-L-serine + H(+) = a 1,2-diacyl-sn-glycero-3-phosphoethanolamine + CO2. The protein operates within phospholipid metabolism; phosphatidylethanolamine biosynthesis; phosphatidylethanolamine from CDP-diacylglycerol: step 2/2. In terms of biological role, catalyzes the formation of phosphatidylethanolamine (PtdEtn) from phosphatidylserine (PtdSer). Plays a central role in phospholipid metabolism and in the interorganelle trafficking of phosphatidylserine. Contributes only to a minor proportion of PtdEtn production. The protein is Phosphatidylserine decarboxylase proenzyme 2 (PSD2) of Arabidopsis thaliana (Mouse-ear cress).